A 109-amino-acid polypeptide reads, in one-letter code: Cyclic di-AMP receptor A (109 aa).

Positions 21, 25, 28, 35, 36, 37, 41, 47, 92, and 94 each coordinate 3',3'-c-di-AMP.

As to quaternary structure, homotrimer.

It localises to the cytoplasm. In terms of biological role, binds cyclic di-AMP (c-di-AMP) and is probably involved in c-di-AMP-mediated signaling pathways. In vitro, can also bind cyclic GMP-AMP (3'3'-cGAMP), with lower affinity, but not c-di-GMP or 2'3'-cGAMP. The sequence is that of Cyclic di-AMP receptor A from Bacillus subtilis (strain 168).